The sequence spans 373 residues: Probable jasmonic acid carboxyl methyltransferase 2 (373 aa).

Residue Tyr-18 coordinates S-adenosyl-L-homocysteine. Jasmonate is bound at residue Gln-25. S-adenosyl-L-homocysteine contacts are provided by Cys-59, Asn-64, Asp-96, Leu-97, Ser-135, and Phe-136. Jasmonate contacts are provided by His-156 and Trp-157. Mg(2+) is bound by residues Asn-174, Asp-260, Phe-262, and Asn-263.

The protein belongs to the methyltransferase superfamily. Type-7 methyltransferase family. It depends on Mg(2+) as a cofactor.

It is found in the cytoplasm. The protein resides in the nucleus. The enzyme catalyses jasmonate + S-adenosyl-L-methionine = methyl (-)-jasmonate + S-adenosyl-L-homocysteine. It participates in lipid metabolism; oxylipin biosynthesis. In terms of biological role, catalyzes the methylation of jasmonate into methyljasmonate, a plant volatile that acts as an important cellular regulator mediating diverse developmental processes and defense responses. This chain is Probable jasmonic acid carboxyl methyltransferase 2, found in Theobroma cacao (Cacao).